A 126-amino-acid polypeptide reads, in one-letter code: Fatty acid-binding protein 1, liver (126 aa).

This sequence belongs to the calycin superfamily. Fatty-acid binding protein (FABP) family.

It localises to the cytoplasm. Binds free fatty acids and their coenzyme A derivatives, bilirubin, and some other small molecules in the cytoplasm. May be involved in intracellular lipid transport. The specificity of axolotl L-FABP differs from that of LB-FABP. The chain is Fatty acid-binding protein 1, liver from Ambystoma mexicanum (Axolotl).